An 816-amino-acid chain; its full sequence is Sucrose synthase 2 (816 aa).

The interval 280-757 (MVLNVVILSP…GLQRIEEKYT (478 aa)) is GT-B glycosyltransferase.

Belongs to the glycosyltransferase 1 family. Plant sucrose synthase subfamily. Forms homotetramers and heterotetramers with SS1, all three possible heterotetramers are formed. As to expression, abundant in developing endosperm, low in aleurone, and undetected in coleoptiles and roots. Also detected in crude extracts of anthers and in immature embryos.

It catalyses the reaction an NDP-alpha-D-glucose + D-fructose = a ribonucleoside 5'-diphosphate + sucrose + H(+). Sucrose-cleaving enzyme that provides UDP-glucose and fructose for various metabolic pathways. The polypeptide is Sucrose synthase 2 (SS2) (Hordeum vulgare (Barley)).